We begin with the raw amino-acid sequence, 289 residues long: 4-diphosphocytidyl-2-C-methyl-D-erythritol kinase (289 aa).

The active site involves lysine 11. 96–106 (PVAAGIGGGSS) serves as a coordination point for ATP. Aspartate 138 is a catalytic residue.

Belongs to the GHMP kinase family. IspE subfamily.

The catalysed reaction is 4-CDP-2-C-methyl-D-erythritol + ATP = 4-CDP-2-C-methyl-D-erythritol 2-phosphate + ADP + H(+). It participates in isoprenoid biosynthesis; isopentenyl diphosphate biosynthesis via DXP pathway; isopentenyl diphosphate from 1-deoxy-D-xylulose 5-phosphate: step 3/6. Functionally, catalyzes the phosphorylation of the position 2 hydroxy group of 4-diphosphocytidyl-2C-methyl-D-erythritol. The protein is 4-diphosphocytidyl-2-C-methyl-D-erythritol kinase of Azorhizobium caulinodans (strain ATCC 43989 / DSM 5975 / JCM 20966 / LMG 6465 / NBRC 14845 / NCIMB 13405 / ORS 571).